Reading from the N-terminus, the 440-residue chain is MSEFSQTVPELVAWARKNDFSISLPVDRLSFLLAVATLNGERLDGEMSEGELVDAFRHVSDAFEQTSETIGVRANNAINDMVRQRLLNRFTSEQAEGNAIYRLTPLGIGITDYYIRQREFSTLRLSMQLSIVAGELKRAADAAEEGGDEFHWHRNVYAPLKYSVAEIFDSIDLTQRLMDEQQQQVKDDIAQLLNKDWRAAISSCELLLSETSGTLRELQDTLEAAGDKLQANLLRIQDATMIHDDLHFVDRLVFDLQSKLDRIISWGQQSIDLWIGYDRHVHKFIRTAIDMDKNRVFAQRLRQSVQTYFDEPWALTYANADRLLDMRDEEMVLRDEEVTGELPEDLEYEEFNEIREQLAAIIEEQLAVYKTRQVPLDLGLVVREYLSQYPRARHFDVARIVIDQAVRLGVAQADFTGLPAKWQPINDYGAKVQAHVIDKY.

Positions 208 to 236 (LSETSGTLRELQDTLEAAGDKLQANLLRI) are leucine-zipper.

This sequence belongs to the MukF family. Interacts, and probably forms a ternary complex, with MukE and MukB via its C-terminal region. The complex formation is stimulated by calcium or magnesium. It is required for an interaction between MukE and MukB.

Its subcellular location is the cytoplasm. It localises to the nucleoid. Its function is as follows. Involved in chromosome condensation, segregation and cell cycle progression. May participate in facilitating chromosome segregation by condensation DNA from both sides of a centrally located replisome during cell division. Not required for mini-F plasmid partitioning. Probably acts via its interaction with MukB and MukE. Overexpression results in anucleate cells. It has a calcium binding activity. The chain is Chromosome partition protein MukF from Escherichia coli O127:H6 (strain E2348/69 / EPEC).